The chain runs to 1617 residues: Mitogen-activated protein kinase kinae kinase bck1 (1617 aa).

9 disordered regions span residues M1 to Q73, G167 to P199, S211 to S253, R345 to L399, D455 to Y555, K568 to K633, G739 to E820, E832 to I1144, and D1164 to R1277. A compositionally biased stretch (low complexity) spans T19–S28. Residues V44 to P60 are compositionally biased toward pro residues. Over residues T220–L248 the composition is skewed to polar residues. A compositionally biased stretch (polar residues) spans K482 to D504. Positions R524–E533 are enriched in basic and acidic residues. Composition is skewed to polar residues over residues I535–Y555 and E586–Q596. 2 stretches are compositionally biased toward basic and acidic residues: residues E832 to Q841 and F871 to D885. Composition is skewed to polar residues over residues P897 to N907 and G956 to S980. Basic and acidic residues-rich tracts occupy residues E1128–A1140 and P1189–N1198. Composition is skewed to polar residues over residues Q1199 to M1208 and N1257 to S1272. A Protein kinase domain is found at I1323 to C1596. Residues I1329–V1337 and K1352 contribute to the ATP site. D1453 acts as the Proton acceptor in catalysis.

Belongs to the protein kinase superfamily. STE Ser/Thr protein kinase family. MAP kinase kinase subfamily.

It catalyses the reaction L-seryl-[protein] + ATP = O-phospho-L-seryl-[protein] + ADP + H(+). The catalysed reaction is L-threonyl-[protein] + ATP = O-phospho-L-threonyl-[protein] + ADP + H(+). Mitogen-activated kinase kinase kinase (MAPKKK), part of the cell wall integrity (CWI) signaling pathway composed by three protein kinases bck1, mkk2 and mpkA and responsible for the maintaining of cell-wall integrity balance. The CWI pathway also regulates the oxidative stress response, as well as the production of some secondary metabolites including pyomelanin. This is Mitogen-activated protein kinase kinae kinase bck1 from Aspergillus fumigatus (strain CBS 144.89 / FGSC A1163 / CEA10) (Neosartorya fumigata).